Reading from the N-terminus, the 809-residue chain is Carbon monoxide dehydrogenase large chain (809 aa).

Cu(+) is bound at residue Cys-388. Residue Glu-763 coordinates Mo-molybdopterin cytosine dinucleotide.

In terms of assembly, dimer of heterotrimers. Each heterotrimer consists of a large, a medium and a small subunit. Cu(+) is required as a cofactor. Requires Mo-molybdopterin cytosine dinucleotide as cofactor.

The catalysed reaction is CO + a quinone + H2O = a quinol + CO2. In terms of biological role, catalyzes the oxidation of carbon monoxide to carbon dioxide. This chain is Carbon monoxide dehydrogenase large chain (coxL), found in Afipia carboxidovorans (strain ATCC 49405 / DSM 1227 / KCTC 32145 / OM5) (Oligotropha carboxidovorans).